A 95-amino-acid chain; its full sequence is Aspartyl/glutamyl-tRNA(Asn/Gln) amidotransferase subunit C (95 aa).

The protein belongs to the GatC family. Heterotrimer of A, B and C subunits.

It catalyses the reaction L-glutamyl-tRNA(Gln) + L-glutamine + ATP + H2O = L-glutaminyl-tRNA(Gln) + L-glutamate + ADP + phosphate + H(+). The catalysed reaction is L-aspartyl-tRNA(Asn) + L-glutamine + ATP + H2O = L-asparaginyl-tRNA(Asn) + L-glutamate + ADP + phosphate + 2 H(+). Allows the formation of correctly charged Asn-tRNA(Asn) or Gln-tRNA(Gln) through the transamidation of misacylated Asp-tRNA(Asn) or Glu-tRNA(Gln) in organisms which lack either or both of asparaginyl-tRNA or glutaminyl-tRNA synthetases. The reaction takes place in the presence of glutamine and ATP through an activated phospho-Asp-tRNA(Asn) or phospho-Glu-tRNA(Gln). This Methylocella silvestris (strain DSM 15510 / CIP 108128 / LMG 27833 / NCIMB 13906 / BL2) protein is Aspartyl/glutamyl-tRNA(Asn/Gln) amidotransferase subunit C.